The primary structure comprises 692 residues: Chaperone protein dnaK1 (692 aa).

Threonine 197 bears the Phosphothreonine; by autocatalysis mark.

Belongs to the heat shock protein 70 family.

Acts as a chaperone. This chain is Chaperone protein dnaK1 (dnaK1), found in Synechocystis sp. (strain ATCC 27184 / PCC 6803 / Kazusa).